The sequence spans 409 residues: Phospho-N-acetylmuramoyl-pentapeptide-transferase (409 aa).

Helical transmembrane passes span 23–43, 73–93, 95–115, 132–152, 214–234, 247–267, 279–299, 305–325, 331–351, and 386–406; these read YITF…TIFG, TPTM…LLLA, LNNI…AIGF, GIFK…TLYF, YAWL…SNGA, TSAI…NVIF, SGEM…FLWY, AVFM…VLAI, MLIP…VLQV, and KIVT…IVTL.

This sequence belongs to the glycosyltransferase 4 family. MraY subfamily. Mg(2+) is required as a cofactor.

The protein resides in the cell inner membrane. It catalyses the reaction UDP-N-acetyl-alpha-D-muramoyl-L-alanyl-gamma-D-glutamyl-meso-2,6-diaminopimeloyl-D-alanyl-D-alanine + di-trans,octa-cis-undecaprenyl phosphate = di-trans,octa-cis-undecaprenyl diphospho-N-acetyl-alpha-D-muramoyl-L-alanyl-D-glutamyl-meso-2,6-diaminopimeloyl-D-alanyl-D-alanine + UMP. Its pathway is cell wall biogenesis; peptidoglycan biosynthesis. Its function is as follows. Catalyzes the initial step of the lipid cycle reactions in the biosynthesis of the cell wall peptidoglycan: transfers peptidoglycan precursor phospho-MurNAc-pentapeptide from UDP-MurNAc-pentapeptide onto the lipid carrier undecaprenyl phosphate, yielding undecaprenyl-pyrophosphoryl-MurNAc-pentapeptide, known as lipid I. The sequence is that of Phospho-N-acetylmuramoyl-pentapeptide-transferase from Flavobacterium psychrophilum (strain ATCC 49511 / DSM 21280 / CIP 103535 / JIP02/86).